The chain runs to 336 residues: Anthranilate phosphoribosyltransferase (336 aa).

5-phospho-alpha-D-ribose 1-diphosphate-binding positions include G80, 83 to 84, T88, 90 to 93, 108 to 116, and S120; these read GD, NIST, and KHGNRSITS. G80 serves as a coordination point for anthranilate. Position 92 (S92) interacts with Mg(2+). N111 is a binding site for anthranilate. Residue R166 participates in anthranilate binding. D224 and E225 together coordinate Mg(2+).

This sequence belongs to the anthranilate phosphoribosyltransferase family. In terms of assembly, homodimer. It depends on Mg(2+) as a cofactor.

It carries out the reaction N-(5-phospho-beta-D-ribosyl)anthranilate + diphosphate = 5-phospho-alpha-D-ribose 1-diphosphate + anthranilate. It functions in the pathway amino-acid biosynthesis; L-tryptophan biosynthesis; L-tryptophan from chorismate: step 2/5. Catalyzes the transfer of the phosphoribosyl group of 5-phosphorylribose-1-pyrophosphate (PRPP) to anthranilate to yield N-(5'-phosphoribosyl)-anthranilate (PRA). In Caldicellulosiruptor saccharolyticus (strain ATCC 43494 / DSM 8903 / Tp8T 6331), this protein is Anthranilate phosphoribosyltransferase.